A 40-amino-acid chain; its full sequence is Photosystem II reaction center protein J (40 aa).

The chain crosses the membrane as a helical span at residues 8–28 (IPLWLIGTVTGILVIGLIGVF).

The protein belongs to the PsbJ family. As to quaternary structure, PSII is composed of 1 copy each of membrane proteins PsbA, PsbB, PsbC, PsbD, PsbE, PsbF, PsbH, PsbI, PsbJ, PsbK, PsbL, PsbM, PsbT, PsbX, PsbY, PsbZ, Psb30/Ycf12, at least 3 peripheral proteins of the oxygen-evolving complex and a large number of cofactors. It forms dimeric complexes.

It localises to the plastid. Its subcellular location is the chloroplast thylakoid membrane. In terms of biological role, one of the components of the core complex of photosystem II (PSII). PSII is a light-driven water:plastoquinone oxidoreductase that uses light energy to abstract electrons from H(2)O, generating O(2) and a proton gradient subsequently used for ATP formation. It consists of a core antenna complex that captures photons, and an electron transfer chain that converts photonic excitation into a charge separation. The protein is Photosystem II reaction center protein J of Nymphaea alba (White water-lily).